Reading from the N-terminus, the 279-residue chain is Putative F-box protein At1g50880 (279 aa).

An F-box domain is found at 19 to 69 (SSSMSSIPLDVTSKILAKLPAKSVLRARCVSKQWSSISTDPYFISNMFPKQ).

The polypeptide is Putative F-box protein At1g50880 (Arabidopsis thaliana (Mouse-ear cress)).